We begin with the raw amino-acid sequence, 171 residues long: Endoribonuclease YbeY (171 aa).

The Zn(2+) site is built by His-115, His-119, and His-125.

The protein belongs to the endoribonuclease YbeY family. Requires Zn(2+) as cofactor.

It localises to the cytoplasm. Single strand-specific metallo-endoribonuclease involved in late-stage 70S ribosome quality control and in maturation of the 3' terminus of the 16S rRNA. The polypeptide is Endoribonuclease YbeY (Tropheryma whipplei (strain TW08/27) (Whipple's bacillus)).